A 419-amino-acid chain; its full sequence is Innexin inx5 (419 aa).

Topologically, residues 1–21 are cytoplasmic; the sequence is MFSAVKPLSKYLQFKSIRIYD. A helical membrane pass occupies residues 22-42; it reads SVFTIHSRCTVVILLTCSLLL. Residues 43–162 lie on the Extracellular side of the membrane; it reads SARQYFGDPI…QTERQYLRYY (120 aa). Residues 163 to 183 form a helical membrane-spanning segment; that stretch reads QWVIILLLFQSFVFYFPSCLW. The Cytoplasmic segment spans residues 184–238; sequence KVWEGRRLKQLCSEVGDALLSEETYNTRLRMLVKYFTTDYEDMHFCYMAKYVFCE. The helical transmembrane segment at 239-259 threads the bilayer; sequence VLNFLISVVNIIVLEVFLNGF. Over 260–320 the chain is Extracellular; sequence WSKYLRALAT…ILPLNILNEK (61 aa). Residues 321 to 341 form a helical membrane-spanning segment; that stretch reads IFVFLWAWFLLMALMSGLNLL. The Cytoplasmic segment spans residues 342–419; the sequence is CRLAMICSRY…ASGSTLESPV (78 aa).

It belongs to the pannexin family. As to expression, expressed in the cortex of the pupal CNS and at low levels in the wing imaginal disk.

It is found in the cell membrane. It localises to the cell junction. Its subcellular location is the gap junction. Functionally, structural component of the gap junctions. The sequence is that of Innexin inx5 (Inx5) from Drosophila melanogaster (Fruit fly).